Here is an 85-residue protein sequence, read N- to C-terminus: Transcription factor 4 (85 aa).

A bHLH domain is found at 7 to 60 (ERRMANNARERLRVRDINEAFKELGRMVQLHLKSDKPQTKLLILHQAVAVILSL). A class A specific domain region spans residues 62 to 85 (QQVRERNLNPKAACLKRREEEKVS).

As to quaternary structure, efficient DNA binding requires dimerization with another bHLH protein. Forms homo- or heterooligomers with myogenin.

The protein localises to the nucleus. In terms of biological role, transcription factor that binds to the immunoglobulin enhancer Mu-E5/KE5-motif. Involved in the initiation of neuronal differentiation. Binds to the E-box present in the somatostatin receptor 2 initiator element (SSTR2-INR) to activate transcription. The chain is Transcription factor 4 (TCF4) from Gallus gallus (Chicken).